A 203-amino-acid chain; its full sequence is Recombination protein RecR (203 aa).

The C4-type zinc-finger motif lies at 56–71 (CAVCGNVSDEERCRIC). The region spanning 79–179 (SLICVVEEPK…TVTRIASGLP (101 aa)) is the Toprim domain.

This sequence belongs to the RecR family.

May play a role in DNA repair. It seems to be involved in an RecBC-independent recombinational process of DNA repair. It may act with RecF and RecO. In Mycolicibacterium vanbaalenii (strain DSM 7251 / JCM 13017 / BCRC 16820 / KCTC 9966 / NRRL B-24157 / PYR-1) (Mycobacterium vanbaalenii), this protein is Recombination protein RecR.